The primary structure comprises 404 residues: CCA-adding enzyme (404 aa).

Gly27 and Arg30 together coordinate ATP. CTP is bound by residues Gly27 and Arg30. The Mg(2+) site is built by Asp40 and Asp42. ATP-binding residues include Arg111, Asp154, Arg157, Arg160, and Arg163. CTP is bound by residues Arg111, Asp154, Arg157, Arg160, and Arg163.

This sequence belongs to the tRNA nucleotidyltransferase/poly(A) polymerase family. Bacterial CCA-adding enzyme type 3 subfamily. In terms of assembly, homodimer. It depends on Mg(2+) as a cofactor.

It catalyses the reaction a tRNA precursor + 2 CTP + ATP = a tRNA with a 3' CCA end + 3 diphosphate. The enzyme catalyses a tRNA with a 3' CCA end + 2 CTP + ATP = a tRNA with a 3' CCACCA end + 3 diphosphate. Functionally, catalyzes the addition and repair of the essential 3'-terminal CCA sequence in tRNAs without using a nucleic acid template. Adds these three nucleotides in the order of C, C, and A to the tRNA nucleotide-73, using CTP and ATP as substrates and producing inorganic pyrophosphate. tRNA 3'-terminal CCA addition is required both for tRNA processing and repair. Also involved in tRNA surveillance by mediating tandem CCA addition to generate a CCACCA at the 3' terminus of unstable tRNAs. While stable tRNAs receive only 3'-terminal CCA, unstable tRNAs are marked with CCACCA and rapidly degraded. The structural flexibility of RNA controls the choice between CCA versus CCACCA addition: following the first CCA addition cycle, nucleotide-binding to the active site triggers a clockwise screw motion, producing torque on the RNA. This ejects stable RNAs, whereas unstable RNAs are refolded while bound to the enzyme and subjected to a second CCA catalytic cycle. This Geobacillus stearothermophilus (Bacillus stearothermophilus) protein is CCA-adding enzyme.